A 295-amino-acid chain; its full sequence is Lipoyl synthase (295 aa).

The [4Fe-4S] cluster site is built by Cys-34, Cys-39, Cys-45, Cys-60, Cys-64, Cys-67, and Ser-273. In terms of domain architecture, Radical SAM core spans 46–262 (WNKRHATIMV…KRMAYAKGFS (217 aa)).

This sequence belongs to the radical SAM superfamily. Lipoyl synthase family. [4Fe-4S] cluster is required as a cofactor.

The protein resides in the cytoplasm. The catalysed reaction is [[Fe-S] cluster scaffold protein carrying a second [4Fe-4S](2+) cluster] + N(6)-octanoyl-L-lysyl-[protein] + 2 oxidized [2Fe-2S]-[ferredoxin] + 2 S-adenosyl-L-methionine + 4 H(+) = [[Fe-S] cluster scaffold protein] + N(6)-[(R)-dihydrolipoyl]-L-lysyl-[protein] + 4 Fe(3+) + 2 hydrogen sulfide + 2 5'-deoxyadenosine + 2 L-methionine + 2 reduced [2Fe-2S]-[ferredoxin]. It participates in protein modification; protein lipoylation via endogenous pathway; protein N(6)-(lipoyl)lysine from octanoyl-[acyl-carrier-protein]: step 2/2. Catalyzes the radical-mediated insertion of two sulfur atoms into the C-6 and C-8 positions of the octanoyl moiety bound to the lipoyl domains of lipoate-dependent enzymes, thereby converting the octanoylated domains into lipoylated derivatives. This is Lipoyl synthase from Anaplasma phagocytophilum (strain HZ).